Reading from the N-terminus, the 319-residue chain is Ribosomal large subunit pseudouridine synthase C (319 aa).

One can recognise an S4 RNA-binding domain in the interval 20–83 (QRIDNFLRTQ…AEREEEAVSP (64 aa)). Residue Asp-144 is part of the active site.

It belongs to the pseudouridine synthase RluA family.

It catalyses the reaction uridine(955/2504/2580) in 23S rRNA = pseudouridine(955/2504/2580) in 23S rRNA. Functionally, responsible for synthesis of pseudouridine from uracil at positions 955, 2504 and 2580 in 23S ribosomal RNA. The chain is Ribosomal large subunit pseudouridine synthase C from Escherichia coli (strain K12).